The following is a 692-amino-acid chain: Glycine--tRNA ligase beta subunit (692 aa).

The protein belongs to the class-II aminoacyl-tRNA synthetase family. As to quaternary structure, tetramer of two alpha and two beta subunits.

It localises to the cytoplasm. It carries out the reaction tRNA(Gly) + glycine + ATP = glycyl-tRNA(Gly) + AMP + diphosphate. This is Glycine--tRNA ligase beta subunit from Oceanobacillus iheyensis (strain DSM 14371 / CIP 107618 / JCM 11309 / KCTC 3954 / HTE831).